A 145-amino-acid polypeptide reads, in one-letter code: MALRLILGFDYGTKQIGVAVGQVITGQARELCTLKAQNGVPDWNQVEALIKEWKPDAVVVGLPLNMDGTPSEMCARAEKFARRLNGRFNLPFYTHDERLTTFEAKGERLVRGGQKGSYRDNPVDAIAAALLLQGWLDENTALFES.

It belongs to the YqgF nuclease family.

The protein localises to the cytoplasm. In terms of biological role, could be a nuclease involved in processing of the 5'-end of pre-16S rRNA. In Pseudomonas fluorescens (strain Pf0-1), this protein is Putative pre-16S rRNA nuclease.